A 98-amino-acid chain; its full sequence is MERKKFSSKFIHLLIVFLLLCTFLSRTESALPYHHELFLGRKRMNYYKPNSAIGTPSSTSDHAPGSNGRKLMSIYRPNGDIFTGPSGSGHGGGRTPAP.

The signal sequence occupies residues 1-29; it reads MERKKFSSKFIHLLIVFLLLCTFLSRTES. Residues 50 to 98 form a disordered region; the sequence is NSAIGTPSSTSDHAPGSNGRKLMSIYRPNGDIFTGPSGSGHGGGRTPAP. Over residues 52 to 61 the composition is skewed to polar residues; it reads AIGTPSSTSD. Short sequence motifs (SCOOP motif) lie at residues 52 to 66 and 80 to 94; these read AIGTPSSTSDHAPGS and DIFTGPSGSGHGGGR. Short sequence motifs (sxS motif essential for MIK2 binding) lie at residues 58 to 60 and 86 to 88; these read STS and SGS. Positions 86-98 are enriched in gly residues; it reads SGSGHGGGRTPAP.

The protein belongs to the serine rich endogenous peptide (SCOOP) phytocytokine family. As to quaternary structure, interacts with MIK2 (via extracellular leucine-rich repeat domain); this interaction triggers the formation of complex between MIK2 and the BAK1/SERK3 and SERK4 coreceptors, and subsequent BAK1 activation by phosphorylation. In terms of tissue distribution, mostly expressed in leaves and seedlings shoots, to a lower extent, in roots, but barely in flowers.

Its subcellular location is the cell membrane. The protein localises to the secreted. It is found in the extracellular space. It localises to the apoplast. Functionally, brassicaceae-specific phytocytokine (plant endogenous peptide released into the apoplast) perceived by MIK2 in a BAK1/SERK3 and SERK4 coreceptors-dependent manner, that modulates various physiological and antimicrobial processes including growth prevention and reactive oxygen species (ROS) response regulation. Inhibits root growth and regulates root meristems. Promotes ROS production and MAPK (e.g. MPK3, MPK4 and MPK6) activation in a MIK2-dependent manner, thus leading to the up-regulation of immune-related marker genes (e.g. WRKY30, WRKY33 and CYP81F2). In Arabidopsis thaliana (Mouse-ear cress), this protein is Serine rich endogenous peptide 10.